The primary structure comprises 627 residues: (R)-linalool synthase, chloroplastic (627 aa).

A chloroplast-targeting transit peptide spans methionine 1 to serine 21. Mg(2+) contacts are provided by aspartate 378, aspartate 382, and glutamate 530. The DDXXD motif signature appears at aspartate 378–aspartate 382.

It belongs to the terpene synthase family. Tpsd subfamily. Mg(2+) is required as a cofactor. The cofactor is Mn(2+).

It localises to the plastid. It is found in the chloroplast. It catalyses the reaction (2E)-geranyl diphosphate + H2O = (R)-linalool + diphosphate. The protein operates within terpene metabolism; oleoresin biosynthesis. Its function is as follows. Terpene synthase (TPS) involved in the biosynthesis of monoterpene natural products included in conifer oleoresin secretions and volatile emissions; these compounds contribute to biotic and abiotic stress defense against herbivores and pathogens. Catalyzes the conversion of (2E)-geranyl diphosphate (GPP) to (R)-linalool. This is (R)-linalool synthase, chloroplastic from Picea glauca (White spruce).